Consider the following 156-residue polypeptide: Protein-export protein SecB (156 aa).

Belongs to the SecB family. As to quaternary structure, homotetramer, a dimer of dimers. One homotetramer interacts with 1 SecA dimer.

The protein localises to the cytoplasm. One of the proteins required for the normal export of preproteins out of the cell cytoplasm. It is a molecular chaperone that binds to a subset of precursor proteins, maintaining them in a translocation-competent state. It also specifically binds to its receptor SecA. The protein is Protein-export protein SecB of Xanthobacter autotrophicus (strain ATCC BAA-1158 / Py2).